A 372-amino-acid polypeptide reads, in one-letter code: UDP-N-acetylglucosamine--N-acetylmuramyl-(pentapeptide) pyrophosphoryl-undecaprenol N-acetylglucosamine transferase (372 aa).

Residues 16 to 18 (TGG), Asn-128, Arg-164, Ser-192, Ile-250, and Gln-295 each bind UDP-N-acetyl-alpha-D-glucosamine.

Belongs to the glycosyltransferase 28 family. MurG subfamily.

It localises to the cell inner membrane. The catalysed reaction is di-trans,octa-cis-undecaprenyl diphospho-N-acetyl-alpha-D-muramoyl-L-alanyl-D-glutamyl-meso-2,6-diaminopimeloyl-D-alanyl-D-alanine + UDP-N-acetyl-alpha-D-glucosamine = di-trans,octa-cis-undecaprenyl diphospho-[N-acetyl-alpha-D-glucosaminyl-(1-&gt;4)]-N-acetyl-alpha-D-muramoyl-L-alanyl-D-glutamyl-meso-2,6-diaminopimeloyl-D-alanyl-D-alanine + UDP + H(+). The protein operates within cell wall biogenesis; peptidoglycan biosynthesis. Functionally, cell wall formation. Catalyzes the transfer of a GlcNAc subunit on undecaprenyl-pyrophosphoryl-MurNAc-pentapeptide (lipid intermediate I) to form undecaprenyl-pyrophosphoryl-MurNAc-(pentapeptide)GlcNAc (lipid intermediate II). The sequence is that of UDP-N-acetylglucosamine--N-acetylmuramyl-(pentapeptide) pyrophosphoryl-undecaprenol N-acetylglucosamine transferase from Paraburkholderia phytofirmans (strain DSM 17436 / LMG 22146 / PsJN) (Burkholderia phytofirmans).